The following is a 536-amino-acid chain: Probable cytochrome P450 12a5, mitochondrial (536 aa).

Cysteine 482 provides a ligand contact to heme.

Belongs to the cytochrome P450 family. Requires heme as cofactor.

Its subcellular location is the mitochondrion membrane. The sequence is that of Probable cytochrome P450 12a5, mitochondrial (Cyp12a5) from Drosophila melanogaster (Fruit fly).